The primary structure comprises 248 residues: MFNSPLEQFEILPLLSFGANLFDFSITNAMLTTCVSLSFFLFLFYCLFSYGLNSFPTRWQLVLEGLYTSTAGLVWDSVGPRRPKVFPFLFVIFSFILISNVQGLVPYSFTITSHLIQTMVLALTVFIGVIIIVLAHGFHMLSLFLPGGTSIVLAFLLVPIEIVSYVFKPLSLAVRLFANMMAGHTLLKVIAAVAWAMMGSGGLLLIAHIVPLGVLVILFGLELAVALIQAYVFTILSCIYINDAIVLH.

7 helical membrane-spanning segments follow: residues 29–49 (AMLT…CLFS), 85–105 (VFPF…QGLV), 115–135 (LIQT…IVLA), 143–163 (LFLP…IEIV), 176–196 (LFAN…VAWA), 201–221 (GGLL…LFGL), and 227–247 (LIQA…AIVL).

It belongs to the ATPase A chain family. As to quaternary structure, F-type ATPases have 2 components, CF(1) - the catalytic core - and CF(0) - the membrane proton channel. CF(1) has five subunits: alpha(3), beta(3), gamma(1), delta(1), epsilon(1). CF(0) has three main subunits: a, b and c.

It localises to the mitochondrion inner membrane. Mitochondrial membrane ATP synthase (F(1)F(0) ATP synthase or Complex V) produces ATP from ADP in the presence of a proton gradient across the membrane which is generated by electron transport complexes of the respiratory chain. F-type ATPases consist of two structural domains, F(1) - containing the extramembraneous catalytic core and F(0) - containing the membrane proton channel, linked together by a central stalk and a peripheral stalk. During catalysis, ATP synthesis in the catalytic domain of F(1) is coupled via a rotary mechanism of the central stalk subunits to proton translocation. Key component of the proton channel; it may play a direct role in the translocation of protons across the membrane. In Pylaiella littoralis (Seaweed), this protein is ATP synthase subunit a (ATP6).